The chain runs to 118 residues: Hisactophilin-2 (118 aa).

Gly-2 carries the N-myristoyl glycine lipid modification. Positions 8 to 109 are contains several HHXH repeats; the sequence is AHNGHYLSAE…HVSTSHHHDH (102 aa). Tandem repeats lie at residues 34–46 and 74–86. Residues 34–86 form a 2 X 13 AA approximate repeats region; sequence FHIENHGSKVALRTHCGKYVSIGDHKQVYLSHHLHGDHSLFHLEHHHGKVSIK. The interval 99–118 is disordered; it reads GHVSTSHHHDHHATFEEHIL.

Belongs to the hisactophilin family. Homodimer or heterodimer of hatA and hatB, linked by a disulfide bond. Post-translationally, phosphorylated.

The protein localises to the cytoplasm. Its subcellular location is the cell membrane. Functionally, may act as an intracellular pH sensor that links chemotactic signals to responses in the microfilament system of the cells by nucleating actin polymerization or stabilizing the filaments. The chain is Hisactophilin-2 (hatB) from Dictyostelium discoideum (Social amoeba).